A 103-amino-acid polypeptide reads, in one-letter code: MYAVFIAGGKQHRVEEGEVLRLEKIEVATGESVDFDQVLLVTKGDDVKIGAPYVEGAKVTAEVVSHGRADKVRIIKFRRRKHSMTRQGHRQWYTEVKITGIAG.

It belongs to the bacterial ribosomal protein bL21 family. As to quaternary structure, part of the 50S ribosomal subunit. Contacts protein L20.

This protein binds to 23S rRNA in the presence of protein L20. This Saccharophagus degradans (strain 2-40 / ATCC 43961 / DSM 17024) protein is Large ribosomal subunit protein bL21.